The chain runs to 586 residues: Laccase-9 (586 aa).

Positions 1–25 are cleaved as a signal peptide; sequence MPRVHHSLSNQAFLVLLLFSSIASA. Plastocyanin-like domains lie at 33 to 149 and 159 to 307; these read HVKD…PRSG and KEVP…YEGA. N-linked (GlcNAc...) asparagine glycosylation is found at N52, N74, and N79. Cu cation contacts are provided by H83 and H85. Residue N111 is glycosylated (N-linked (GlcNAc...) asparagine). Cu cation contacts are provided by H128 and H130. N-linked (GlcNAc...) asparagine glycans are attached at residues N236, N333, N385, N403, and N451. Positions 411-552 constitute a Plastocyanin-like 3 domain; that stretch reads DFPDQPPLKF…MMAFIVQNGP (142 aa). Residues H469, H472, H474, H531, C532, H533, and H537 each coordinate Cu cation.

The protein belongs to the multicopper oxidase family. The cofactor is Cu cation. In terms of tissue distribution, predominantly expressed in roots.

The protein localises to the secreted. It is found in the extracellular space. It localises to the apoplast. The catalysed reaction is 4 hydroquinone + O2 = 4 benzosemiquinone + 2 H2O. Lignin degradation and detoxification of lignin-derived products. The chain is Laccase-9 (LAC9) from Arabidopsis thaliana (Mouse-ear cress).